Here is a 154-residue protein sequence, read N- to C-terminus: Deoxyuridine 5'-triphosphate nucleotidohydrolase (154 aa).

Substrate is bound by residues 64-66 (RSG), asparagine 77, 81-83 (TID), and lysine 91.

The protein belongs to the dUTPase family. As to quaternary structure, homotrimer. Mg(2+) is required as a cofactor.

The catalysed reaction is dUTP + H2O = dUMP + diphosphate + H(+). It functions in the pathway pyrimidine metabolism; dUMP biosynthesis; dUMP from dCTP (dUTP route): step 2/2. In terms of biological role, this enzyme is involved in nucleotide metabolism: it produces dUMP, the immediate precursor of thymidine nucleotides and it decreases the intracellular concentration of dUTP so that uracil cannot be incorporated into DNA. The polypeptide is Deoxyuridine 5'-triphosphate nucleotidohydrolase (Mycobacterium sp. (strain JLS)).